A 180-amino-acid polypeptide reads, in one-letter code: Large ribosomal subunit protein uL5 (180 aa).

Belongs to the universal ribosomal protein uL5 family. As to quaternary structure, part of the 50S ribosomal subunit; part of the 5S rRNA/L5/L18/L25 subcomplex. Contacts the 5S rRNA and the P site tRNA. Forms a bridge to the 30S subunit in the 70S ribosome.

In terms of biological role, this is one of the proteins that bind and probably mediate the attachment of the 5S RNA into the large ribosomal subunit, where it forms part of the central protuberance. In the 70S ribosome it contacts protein S13 of the 30S subunit (bridge B1b), connecting the 2 subunits; this bridge is implicated in subunit movement. Contacts the P site tRNA; the 5S rRNA and some of its associated proteins might help stabilize positioning of ribosome-bound tRNAs. This is Large ribosomal subunit protein uL5 from Stenotrophomonas maltophilia (strain R551-3).